Consider the following 136-residue polypeptide: Protein NrdI (136 aa).

This sequence belongs to the NrdI family.

Functionally, probably involved in ribonucleotide reductase function. In Salmonella newport (strain SL254), this protein is Protein NrdI.